We begin with the raw amino-acid sequence, 82 residues long: Small ribosomal subunit protein uS17 (82 aa).

This sequence belongs to the universal ribosomal protein uS17 family. In terms of assembly, part of the 30S ribosomal subunit.

In terms of biological role, one of the primary rRNA binding proteins, it binds specifically to the 5'-end of 16S ribosomal RNA. The polypeptide is Small ribosomal subunit protein uS17 (Shewanella frigidimarina (strain NCIMB 400)).